Consider the following 639-residue polypeptide: Sodium-dependent phosphate transport protein 2A (639 aa).

Topologically, residues 1–103 (MISYGENLGG…LRRAGVTLLK (103 aa)) are cytoplasmic. Phosphoserine occurs at positions 14 and 34. A helical membrane pass occupies residues 104-125 (VPLMLSFLYLFVCSLDVLSSAF). Residues 126 to 145 (QLAGGKVAGDIFKDNAILSN) are Extracellular-facing. A helical transmembrane segment spans residues 146-163 (PVAGLVVGILVTVLVQSS). At 164–165 (ST) the chain is on the cytoplasmic side. The chain crosses the membrane as a helical span at residues 166-185 (STSIVVSMVSSGLLEVSSAI). At 186–347 (PIIMGSNIGT…HIFVDTGLPD (162 aa)) the chain is on the extracellular side. 2 cysteine pairs are disulfide-bonded: Cys225–Cys522 and Cys306–Cys336. 3 N-linked (GlcNAc...) asparagine glycosylation sites follow: Asn298, Asn323, and Asn330. Residues 348 to 370 (LAVGLILLAGSLALLCTCLILLV) form a helical membrane-spanning segment. The Cytoplasmic segment spans residues 371 to 412 (KMLNSLLKGQVAKVIQKVINTDFPTPFTWATGYFAMVVGASM). A helical membrane pass occupies residues 413–436 (TFVVQSSSVFTSAITPLIGLGVIS). Topologically, residues 437-466 (IERAYPLTLGSNIGTTTTAILAALASPREK) are extracellular. Residues 467 to 487 (LSSAFQIALCHFFFNISGILL) form a helical membrane-spanning segment. The Cytoplasmic portion of the chain corresponds to 488–513 (WYPVPCTRLPIRMAKALGKRTAKYRW). Residue Thr508 is modified to Phosphothreonine; by PKC. Residues 514–534 (FAVLYLLLCFLLLPSMVFGLS) form a helical membrane-spanning segment. Residues 535–539 (MAGWR) lie on the Extracellular side of the membrane. Residues 540 to 561 (AMVGVGAPFGALLAFVVLVSAL) form a helical membrane-spanning segment. Topologically, residues 562–639 (QHRSPGCLPK…MPHHHDATRL (78 aa)) are cytoplasmic. Phosphoserine is present on Ser607. Thr623 is subject to Phosphothreonine. A Phosphoserine modification is found at Ser625.

Belongs to the SLC34A transporter family. As to quaternary structure, interacts via its C-terminal region with NHERF4. Interacts with NHERF1. Interacts with TMEM174; regulates SLC34A1 internalization by PTH and FGF23.

Its subcellular location is the apical cell membrane. The protein localises to the cell membrane. The catalysed reaction is 3 Na(+)(out) + phosphate(out) = 3 Na(+)(in) + phosphate(in). Its function is as follows. Involved in actively transporting phosphate into cells via Na(+) cotransport in the renal brush border membrane. The cotransport has a Na(+):Pi stoichiometry of 3:1 and is electrogenic. The chain is Sodium-dependent phosphate transport protein 2A from Ovis aries (Sheep).